Consider the following 380-residue polypeptide: Cystathionine beta-lyase (380 aa).

The residue at position 196 (K196) is an N6-(pyridoxal phosphate)lysine.

It belongs to the trans-sulfuration enzymes family. The cofactor is pyridoxal 5'-phosphate.

It localises to the cytoplasm. The catalysed reaction is L,L-cystathionine + H2O = L-homocysteine + pyruvate + NH4(+). It catalyses the reaction an S-substituted L-cysteine + H2O = a thiol + pyruvate + NH4(+). Its pathway is amino-acid biosynthesis; L-methionine biosynthesis via de novo pathway; L-homocysteine from L-cystathionine: step 1/1. Functionally, the enzymatic degradation of amino acids in cheese is believed to generate aroma compounds and therefore to be essential for flavor development. Cystathionine beta-lyase (CBL) can convert cystathionine to homocysteine but is also able to catalyze an alpha, gamma elimination. With methionine as a substrate, it produces volatile sulfur compounds which are important for flavor formation in Gouda cheese. This chain is Cystathionine beta-lyase (metC), found in Lactococcus lactis subsp. cremoris (Streptococcus cremoris).